A 445-amino-acid polypeptide reads, in one-letter code: 23S rRNA (uracil(1939)-C(5))-methyltransferase RlmD (445 aa).

Residues 1 to 21 form a disordered region; the sequence is MARRRKQLPETPEPASIETLS. The TRAM domain occupies 5–64; sequence RKQLPETPEPASIETLSHDGRGIARRDGKTTFIDNALPGEEVMFKFTYMRRKFDEGKAVE. [4Fe-4S] cluster-binding residues include C77, C83, C86, and C165. S-adenosyl-L-methionine is bound by residues Q275, F304, N309, E325, D352, and D373. C399 functions as the Nucleophile in the catalytic mechanism.

The protein belongs to the class I-like SAM-binding methyltransferase superfamily. RNA M5U methyltransferase family. RlmD subfamily.

It carries out the reaction uridine(1939) in 23S rRNA + S-adenosyl-L-methionine = 5-methyluridine(1939) in 23S rRNA + S-adenosyl-L-homocysteine + H(+). Its function is as follows. Catalyzes the formation of 5-methyl-uridine at position 1939 (m5U1939) in 23S rRNA. This Alcanivorax borkumensis (strain ATCC 700651 / DSM 11573 / NCIMB 13689 / SK2) protein is 23S rRNA (uracil(1939)-C(5))-methyltransferase RlmD.